Reading from the N-terminus, the 657-residue chain is Zinc finger protein 630 (657 aa).

In terms of domain architecture, KRAB spans 8 to 79; it reads VTFEDVAVDF…ESELSRWIYP (72 aa). C2H2-type zinc fingers lie at residues 263–285 and 291–313; these read NVCS…QRIH and YVCG…QRIH. The segment at 319–341 adopts a C2H2-type 3; degenerate zinc-finger fold; that stretch reads YECTKYGRAFSRKSPFTVHQRVH. 9 C2H2-type zinc fingers span residues 347 to 369, 375 to 397, 403 to 425, 431 to 453, 459 to 481, 487 to 509, 515 to 537, 543 to 565, and 571 to 593; these read YECF…QRVH, FECS…QITH, YECT…QRTH, YKCG…QRIH, YVCT…QRLH, YMCT…QRIH, YQCG…LRVH, YECT…QRGH, and YECS…QKTH. The C2H2-type 13; degenerate zinc finger occupies 599–621; sequence PECAESGMTFFWKSQMITYQRRH. Residues 627-649 form a C2H2-type 14; degenerate zinc finger; it reads SRCSDCGKAFCQHVYFTGHQNPY.

The protein belongs to the krueppel C2H2-type zinc-finger protein family.

It is found in the nucleus. May be involved in transcriptional regulation. The sequence is that of Zinc finger protein 630 (ZNF630) from Homo sapiens (Human).